Reading from the N-terminus, the 444-residue chain is tRNA modification GTPase MnmE (444 aa).

(6S)-5-formyl-5,6,7,8-tetrahydrofolate is bound by residues Arg-25, Glu-83, and Lys-122. A TrmE-type G domain is found at 218-370; sequence GFKVAIVGKP…IVGRLRDYLD (153 aa). Residues 228-233, 247-253, and 272-275 each bind GTP; these read NVGKSS, SDEAGTT, and DTAG. Residues Ser-232 and Thr-253 each coordinate Mg(2+). Residue Lys-444 coordinates (6S)-5-formyl-5,6,7,8-tetrahydrofolate.

Belongs to the TRAFAC class TrmE-Era-EngA-EngB-Septin-like GTPase superfamily. TrmE GTPase family. In terms of assembly, homodimer. Heterotetramer of two MnmE and two MnmG subunits. Requires K(+) as cofactor.

The protein localises to the cytoplasm. Its function is as follows. Exhibits a very high intrinsic GTPase hydrolysis rate. Involved in the addition of a carboxymethylaminomethyl (cmnm) group at the wobble position (U34) of certain tRNAs, forming tRNA-cmnm(5)s(2)U34. This is tRNA modification GTPase MnmE from Campylobacter curvus (strain 525.92).